We begin with the raw amino-acid sequence, 129 residues long: Flagellar assembly factor FliW (129 aa).

The protein belongs to the FliW family. Interacts with translational regulator CsrA and flagellin(s).

The protein resides in the cytoplasm. Functionally, acts as an anti-CsrA protein, binds CsrA and prevents it from repressing translation of its target genes, one of which is flagellin. Binds to flagellin and participates in the assembly of the flagellum. The chain is Flagellar assembly factor FliW from Campylobacter jejuni subsp. doylei (strain ATCC BAA-1458 / RM4099 / 269.97).